Here is a 338-residue protein sequence, read N- to C-terminus: Ferrochelatase (338 aa).

Fe cation contacts are provided by His202 and Glu283.

This sequence belongs to the ferrochelatase family.

The protein localises to the cytoplasm. The catalysed reaction is heme b + 2 H(+) = protoporphyrin IX + Fe(2+). It functions in the pathway porphyrin-containing compound metabolism; protoheme biosynthesis; protoheme from protoporphyrin-IX: step 1/1. In terms of biological role, catalyzes the ferrous insertion into protoporphyrin IX. In Acinetobacter baumannii (strain ATCC 17978 / DSM 105126 / CIP 53.77 / LMG 1025 / NCDC KC755 / 5377), this protein is Ferrochelatase.